A 79-amino-acid polypeptide reads, in one-letter code: Conotoxin ArMSGL-0124 (79 aa).

An N-terminal signal peptide occupies residues 1 to 20; that stretch reads MSRLGIMVLTLLLLVYMATS. Residues 21–44 constitute a propeptide that is removed on maturation; the sequence is HQDAGEKQATQRDAINFRWKRSLT. 3 cysteine pairs are disulfide-bonded: C52/C64, C56/C73, and C63/C77. L78 is subject to Leucine amide.

This sequence belongs to the conotoxin O3 superfamily. In terms of tissue distribution, expressed by the venom duct.

The protein localises to the secreted. The protein is Conotoxin ArMSGL-0124 of Conus arenatus (Sand-dusted cone).